Reading from the N-terminus, the 76-residue chain is DNA-directed RNA polymerase subunit epsilon (76 aa).

This sequence belongs to the RNA polymerase subunit epsilon family. As to quaternary structure, RNAP is composed of a core of 2 alpha, a beta and a beta' subunit. The core is associated with a delta subunit, and at least one of epsilon or omega. When a sigma factor is associated with the core the holoenzyme is formed, which can initiate transcription.

The catalysed reaction is RNA(n) + a ribonucleoside 5'-triphosphate = RNA(n+1) + diphosphate. Functionally, a non-essential component of RNA polymerase (RNAP). This Lactococcus lactis subsp. cremoris (strain MG1363) protein is DNA-directed RNA polymerase subunit epsilon.